A 357-amino-acid chain; its full sequence is Protein-glutamate methylesterase/protein-glutamine glutaminase 1 (357 aa).

The 118-residue stretch at 10–127 (RTLIVDDSAF…DVNKIEKELV (118 aa)) folds into the Response regulatory domain. Asp61 carries the 4-aspartylphosphate modification. One can recognise a CheB-type methylesterase domain in the interval 159–353 (SCAGDFAVLI…EEIVRMSEVK (195 aa)). Catalysis depends on residues Ser171, His198, and Asp295.

Belongs to the CheB family. In terms of processing, phosphorylated by CheA. Phosphorylation of the N-terminal regulatory domain activates the methylesterase activity.

The protein resides in the cytoplasm. The enzyme catalyses [protein]-L-glutamate 5-O-methyl ester + H2O = L-glutamyl-[protein] + methanol + H(+). It catalyses the reaction L-glutaminyl-[protein] + H2O = L-glutamyl-[protein] + NH4(+). In terms of biological role, involved in chemotaxis. Part of a chemotaxis signal transduction system that modulates chemotaxis in response to various stimuli. Catalyzes the demethylation of specific methylglutamate residues introduced into the chemoreceptors (methyl-accepting chemotaxis proteins or MCP) by CheR. Also mediates the irreversible deamidation of specific glutamine residues to glutamic acid. The sequence is that of Protein-glutamate methylesterase/protein-glutamine glutaminase 1 from Methanosarcina mazei (strain ATCC BAA-159 / DSM 3647 / Goe1 / Go1 / JCM 11833 / OCM 88) (Methanosarcina frisia).